The primary structure comprises 92 residues: Acylphosphatase (92 aa).

The region spanning 6–92 (RMYVIVYGIV…TGEFASFDTY (87 aa)) is the Acylphosphatase-like domain. Catalysis depends on residues R21 and N39.

It belongs to the acylphosphatase family.

The catalysed reaction is an acyl phosphate + H2O = a carboxylate + phosphate + H(+). This Sulfolobus acidocaldarius (strain ATCC 33909 / DSM 639 / JCM 8929 / NBRC 15157 / NCIMB 11770) protein is Acylphosphatase (acyP).